The primary structure comprises 179 residues: NADH-quinone oxidoreductase subunit B 1 (179 aa).

The [4Fe-4S] cluster site is built by cysteine 38, cysteine 39, cysteine 104, and cysteine 133.

Belongs to the complex I 20 kDa subunit family. As to quaternary structure, NDH-1 is composed of 14 different subunits. Subunits NuoB, C, D, E, F, and G constitute the peripheral sector of the complex. It depends on [4Fe-4S] cluster as a cofactor.

Its subcellular location is the cell membrane. It carries out the reaction a quinone + NADH + 5 H(+)(in) = a quinol + NAD(+) + 4 H(+)(out). In terms of biological role, NDH-1 shuttles electrons from NADH, via FMN and iron-sulfur (Fe-S) centers, to quinones in the respiratory chain. The immediate electron acceptor for the enzyme in this species is believed to be ubiquinone. Couples the redox reaction to proton translocation (for every two electrons transferred, four hydrogen ions are translocated across the cytoplasmic membrane), and thus conserves the redox energy in a proton gradient. The polypeptide is NADH-quinone oxidoreductase subunit B 1 (Herpetosiphon aurantiacus (strain ATCC 23779 / DSM 785 / 114-95)).